Here is a 97-residue protein sequence, read N- to C-terminus: Ferredoxin-3 (97 aa).

2 consecutive 4Fe-4S ferredoxin-type domains span residues 18–47 (FAESIDKDKCIGCGRCIKVCGYPVLDLKAL) and 65–95 (KVMVVAHPENCIGCQACARICPKNCYTHNPL). [4Fe-4S] cluster is bound by residues C27, C30, C33, C37, C75, C78, C81, and C85.

As to quaternary structure, homodimer. [4Fe-4S] cluster is required as a cofactor.

Functionally, ferredoxins are iron-sulfur proteins that transfer electrons in a wide variety of metabolic reactions. The chain is Ferredoxin-3 (fdxB) from Nostoc sp. (strain PCC 7120 / SAG 25.82 / UTEX 2576).